A 361-amino-acid polypeptide reads, in one-letter code: Phospho-N-acetylmuramoyl-pentapeptide-transferase (361 aa).

A run of 10 helical transmembrane segments spans residues 27-47, 70-90, 97-117, 134-154, 167-187, 199-219, 236-256, 263-283, 288-308, and 338-358; these read ILASLTALIVGLLCGPLMIRW, GTPTMGGVLILLAITVSCLLW, SLWLVLLVTLANGLVGWVDDY, YFWQSVIALVAVSYLYWNASL, TVTWDLGVFFPVLAYFVIVGS, GLAIMPIVMVAGALGVFAYAS, TGELTIFCSSIVGAGLGFLWY, VFMGDVGSLALGAALGIVAIV, LVLLIMGGLFVIETLSVILQV, and KVIVRFWIITVVFVLCGLATL.

Belongs to the glycosyltransferase 4 family. MraY subfamily. It depends on Mg(2+) as a cofactor.

It localises to the cell inner membrane. The enzyme catalyses UDP-N-acetyl-alpha-D-muramoyl-L-alanyl-gamma-D-glutamyl-meso-2,6-diaminopimeloyl-D-alanyl-D-alanine + di-trans,octa-cis-undecaprenyl phosphate = di-trans,octa-cis-undecaprenyl diphospho-N-acetyl-alpha-D-muramoyl-L-alanyl-D-glutamyl-meso-2,6-diaminopimeloyl-D-alanyl-D-alanine + UMP. It functions in the pathway cell wall biogenesis; peptidoglycan biosynthesis. Its function is as follows. Catalyzes the initial step of the lipid cycle reactions in the biosynthesis of the cell wall peptidoglycan: transfers peptidoglycan precursor phospho-MurNAc-pentapeptide from UDP-MurNAc-pentapeptide onto the lipid carrier undecaprenyl phosphate, yielding undecaprenyl-pyrophosphoryl-MurNAc-pentapeptide, known as lipid I. This Legionella pneumophila (strain Paris) protein is Phospho-N-acetylmuramoyl-pentapeptide-transferase.